A 552-amino-acid polypeptide reads, in one-letter code: 2-methyl-1,2-propanediol dehydrogenase (552 aa).

It belongs to the GMC oxidoreductase family. FAD serves as cofactor.

Its subcellular location is the cytoplasm. It carries out the reaction 2-methylpropane-1,2-diol + NAD(+) = 2-hydroxy-2-methylpropanal + NADH + H(+). Its function is as follows. Involved in the degradation of methyl tert-butyl ether (MTBE). Catalyzes the conversion of 2-methyl 1,2-propanediol (2-M1,2-PD) to hydroxyisobutyraldehyde. This is 2-methyl-1,2-propanediol dehydrogenase from Mycolicibacterium austroafricanum (Mycobacterium austroafricanum).